A 451-amino-acid chain; its full sequence is Enolase (451 aa).

Glutamine 163 contributes to the (2R)-2-phosphoglycerate binding site. The Proton donor role is filled by glutamate 205. Mg(2+) is bound by residues aspartate 258, glutamate 308, and aspartate 335. (2R)-2-phosphoglycerate is bound by residues lysine 360, arginine 389, serine 390, and lysine 411. Residue lysine 360 is the Proton acceptor of the active site.

This sequence belongs to the enolase family. Mg(2+) serves as cofactor.

Its subcellular location is the cytoplasm. The protein localises to the secreted. The protein resides in the cell surface. It catalyses the reaction (2R)-2-phosphoglycerate = phosphoenolpyruvate + H2O. It functions in the pathway carbohydrate degradation; glycolysis; pyruvate from D-glyceraldehyde 3-phosphate: step 4/5. Its function is as follows. Catalyzes the reversible conversion of 2-phosphoglycerate (2-PG) into phosphoenolpyruvate (PEP). It is essential for the degradation of carbohydrates via glycolysis. The polypeptide is Enolase (Mycoplasma capricolum subsp. capricolum (strain California kid / ATCC 27343 / NCTC 10154)).